The chain runs to 148 residues: Outer envelope pore protein 16-1, chloroplastic (148 aa).

A contains 4 beta strands region spans residues 2 to 73 (PSSTFSGTVS…EHALKKLCKE (72 aa)). 3 helical membrane passes run 75 to 91 (VYWG…EYGI), 102 to 118 (NAML…SAVG), and 125 to 142 (IVID…SQFV).

Belongs to the Tim17/Tim22/Tim23 family. Plastid outer envelope porin OEP16 (TC 1.B.30) subfamily. As to quaternary structure, homodimer and oligomers in membrane. Forms large complexes including TOC33, pPORA and OEP161 during pPORA import into plastids at the plastid envelope membrane. As to expression, expressed predominantly in leaves and cotyledons.

Its subcellular location is the plastid. The protein localises to the chloroplast outer membrane. It is found in the etioplast membrane. Its activity is regulated as follows. Stimulated by GTP. In terms of biological role, voltage-dependent high-conductance channel with a slight cation-selectivity; selective for amino acids but excludes triosephosphates or uncharged sugars. Non-essential amino acid-selective channel protein and translocation pore for NADPH:protochlorophyllide oxidoreductase A (PORA) and possibly PORB. Involved in PORA precursor (pPORA) import and thus confers photoprotection onto etiolated seedlings during greening. The chain is Outer envelope pore protein 16-1, chloroplastic (OEP161) from Arabidopsis thaliana (Mouse-ear cress).